The sequence spans 258 residues: Hydroxyacylglutathione hydrolase (258 aa).

The Zn(2+) site is built by His55, His57, Asp59, His60, His115, Asp132, and His170.

It belongs to the metallo-beta-lactamase superfamily. Glyoxalase II family. Monomer. Zn(2+) is required as a cofactor.

The enzyme catalyses an S-(2-hydroxyacyl)glutathione + H2O = a 2-hydroxy carboxylate + glutathione + H(+). The protein operates within secondary metabolite metabolism; methylglyoxal degradation; (R)-lactate from methylglyoxal: step 2/2. In terms of biological role, thiolesterase that catalyzes the hydrolysis of S-D-lactoyl-glutathione to form glutathione and D-lactic acid. In Shewanella denitrificans (strain OS217 / ATCC BAA-1090 / DSM 15013), this protein is Hydroxyacylglutathione hydrolase.